The sequence spans 219 residues: Octanoyltransferase (219 aa).

The BPL/LPL catalytic domain occupies 32–207 (ENSQDEIWIV…TLSQELGLDK (176 aa)). Substrate contacts are provided by residues 71–78 (RGGQVTYH), 138–140 (SLG), and 151–153 (GLA). The active-site Acyl-thioester intermediate is the C169.

The protein belongs to the LipB family.

The protein resides in the cytoplasm. It carries out the reaction octanoyl-[ACP] + L-lysyl-[protein] = N(6)-octanoyl-L-lysyl-[protein] + holo-[ACP] + H(+). It participates in protein modification; protein lipoylation via endogenous pathway; protein N(6)-(lipoyl)lysine from octanoyl-[acyl-carrier-protein]: step 1/2. Its function is as follows. Catalyzes the transfer of endogenously produced octanoic acid from octanoyl-acyl-carrier-protein onto the lipoyl domains of lipoate-dependent enzymes. Lipoyl-ACP can also act as a substrate although octanoyl-ACP is likely to be the physiological substrate. This chain is Octanoyltransferase, found in Shewanella halifaxensis (strain HAW-EB4).